A 534-amino-acid chain; its full sequence is C-type lectin domain family 18 member A (534 aa).

The segment at 47 to 88 (GALPVAGKPEPMARSLASAPVSPWHHMDRGSTTPAKARSHSA) is disordered. The region spanning 139–270 (LTAHNRLRSR…EAMEAFVCAY (132 aa)) is the SCP domain. One can recognise an EGF-like domain in the interval 316–349 (PRNPCRMSCRNLGHLNISTCRCHCQPGYTGRYCQ). 4 disulfides stabilise this stretch: cysteine 324-cysteine 337, cysteine 339-cysteine 348, cysteine 415-cysteine 520, and cysteine 496-cysteine 512. The C-type lectin domain maps to 394–521 (IDGDCFMVSP…CKTRNRYICQ (128 aa)).

It is found in the secreted. This Mus musculus (Mouse) protein is C-type lectin domain family 18 member A (Clec18a).